A 457-amino-acid chain; its full sequence is MALWGGRFSQESSALFKLFNDSLPVDYRLVEQDIVGSIAWAGAITQVGILSEAECQQLQQALKELLGEVEEKPELILASGAEDIHSFVELSLIAKVGDLGKKLHTGRSRNDQVATDLKLWCKKEGQQQLLLLKALRQALLELAERELDAVMPGYTHLQRAQPVAFGHWCLAYVEMFERDISRLEDALKRADTCPLGTGALAGTAYPMDRYKLAESLGFASPTLNSLDTVSDRDHVVEICSDASISMMHLSRMAEDLIFFNSGEAGFIDLDDEVTSGSSLMPQKKNPDALELIRGKTGRVYGSLIGILTTMKALPLAYNKDMQEDKEGLFDVMDSWAICLEMAALVLSGLKVNRENTLSAAQQGYANSTELADYLVAKGMPFREAHHVVGEVVVKAIAQKKPLEDFELKDLQSFSEIITSDVYDCLTIESCLEKREALGGTALPQVRAALATKLAASE.

This sequence belongs to the lyase 1 family. Argininosuccinate lyase subfamily.

It localises to the cytoplasm. It carries out the reaction 2-(N(omega)-L-arginino)succinate = fumarate + L-arginine. The protein operates within amino-acid biosynthesis; L-arginine biosynthesis; L-arginine from L-ornithine and carbamoyl phosphate: step 3/3. This Shewanella sediminis (strain HAW-EB3) protein is Argininosuccinate lyase.